Reading from the N-terminus, the 544-residue chain is Chaperonin GroEL (544 aa).

ATP is bound by residues T29–P32, D86–T90, G413, N476–A478, and D492. The tract at residues P522–M544 is disordered. Residues P524–A538 are compositionally biased toward low complexity.

It belongs to the chaperonin (HSP60) family. In terms of assembly, forms a cylinder of 14 subunits composed of two heptameric rings stacked back-to-back. Interacts with the co-chaperonin GroES.

It localises to the cytoplasm. The enzyme catalyses ATP + H2O + a folded polypeptide = ADP + phosphate + an unfolded polypeptide.. Functionally, together with its co-chaperonin GroES, plays an essential role in assisting protein folding. The GroEL-GroES system forms a nano-cage that allows encapsulation of the non-native substrate proteins and provides a physical environment optimized to promote and accelerate protein folding. The sequence is that of Chaperonin GroEL from Lacticaseibacillus casei (strain BL23) (Lactobacillus casei).